The primary structure comprises 354 residues: tRNA N6-adenosine threonylcarbamoyltransferase (354 aa).

Positions 111 and 115 each coordinate Fe cation. Residues 134–138 (LVSGG), aspartate 167, glycine 180, and asparagine 279 each bind substrate. Residue aspartate 319 participates in Fe cation binding.

It belongs to the KAE1 / TsaD family. Fe(2+) serves as cofactor.

The protein localises to the cytoplasm. It catalyses the reaction L-threonylcarbamoyladenylate + adenosine(37) in tRNA = N(6)-L-threonylcarbamoyladenosine(37) in tRNA + AMP + H(+). In terms of biological role, required for the formation of a threonylcarbamoyl group on adenosine at position 37 (t(6)A37) in tRNAs that read codons beginning with adenine. Is involved in the transfer of the threonylcarbamoyl moiety of threonylcarbamoyl-AMP (TC-AMP) to the N6 group of A37, together with TsaE and TsaB. TsaD likely plays a direct catalytic role in this reaction. This Neisseria meningitidis serogroup B (strain ATCC BAA-335 / MC58) protein is tRNA N6-adenosine threonylcarbamoyltransferase.